We begin with the raw amino-acid sequence, 185 residues long: Ribosome-recycling factor (185 aa).

This sequence belongs to the RRF family.

It localises to the cytoplasm. Functionally, responsible for the release of ribosomes from messenger RNA at the termination of protein biosynthesis. May increase the efficiency of translation by recycling ribosomes from one round of translation to another. The polypeptide is Ribosome-recycling factor (Geobacillus sp. (strain WCH70)).